Reading from the N-terminus, the 400-residue chain is Bifunctional enzyme IspD/IspF (400 aa).

Residues M1–I244 form a 2-C-methyl-D-erythritol 4-phosphate cytidylyltransferase region. A 2-C-methyl-D-erythritol 2,4-cyclodiphosphate synthase region spans residues R245–T400. A divalent metal cation is bound by residues D251 and H253. Residues D251–H253 and H277–S278 each bind 4-CDP-2-C-methyl-D-erythritol 2-phosphate. H285 is a binding site for a divalent metal cation. 4-CDP-2-C-methyl-D-erythritol 2-phosphate contacts are provided by residues D299–G301, T375–E378, F382, and R385.

It in the N-terminal section; belongs to the IspD/TarI cytidylyltransferase family. IspD subfamily. In the C-terminal section; belongs to the IspF family. A divalent metal cation is required as a cofactor.

It carries out the reaction 2-C-methyl-D-erythritol 4-phosphate + CTP + H(+) = 4-CDP-2-C-methyl-D-erythritol + diphosphate. It catalyses the reaction 4-CDP-2-C-methyl-D-erythritol 2-phosphate = 2-C-methyl-D-erythritol 2,4-cyclic diphosphate + CMP. It functions in the pathway isoprenoid biosynthesis; isopentenyl diphosphate biosynthesis via DXP pathway; isopentenyl diphosphate from 1-deoxy-D-xylulose 5-phosphate: step 2/6. Its pathway is isoprenoid biosynthesis; isopentenyl diphosphate biosynthesis via DXP pathway; isopentenyl diphosphate from 1-deoxy-D-xylulose 5-phosphate: step 4/6. In terms of biological role, bifunctional enzyme that catalyzes the formation of 4-diphosphocytidyl-2-C-methyl-D-erythritol from CTP and 2-C-methyl-D-erythritol 4-phosphate (MEP) (IspD), and catalyzes the conversion of 4-diphosphocytidyl-2-C-methyl-D-erythritol 2-phosphate (CDP-ME2P) to 2-C-methyl-D-erythritol 2,4-cyclodiphosphate (ME-CPP) with a corresponding release of cytidine 5-monophosphate (CMP) (IspF). The protein is Bifunctional enzyme IspD/IspF of Dinoroseobacter shibae (strain DSM 16493 / NCIMB 14021 / DFL 12).